We begin with the raw amino-acid sequence, 148 residues long: uncharacterized protein (148 aa).

A signal peptide spans 1 to 18 (MKIILTVLAGVGLLSAGG). Cysteine 19 carries the N-palmitoyl cysteine lipid modification. Residue cysteine 19 is the site of S-diacylglycerol cysteine attachment.

The protein localises to the cell membrane. This is an uncharacterized protein from Bacillus subtilis (strain 168).